We begin with the raw amino-acid sequence, 689 residues long: Glycine--tRNA ligase beta subunit (689 aa).

It belongs to the class-II aminoacyl-tRNA synthetase family. In terms of assembly, tetramer of two alpha and two beta subunits.

The protein localises to the cytoplasm. The enzyme catalyses tRNA(Gly) + glycine + ATP = glycyl-tRNA(Gly) + AMP + diphosphate. The protein is Glycine--tRNA ligase beta subunit of Shewanella baltica (strain OS195).